A 570-amino-acid chain; its full sequence is Pentatricopeptide repeat-containing protein At1g31430 (570 aa).

13 PPR repeats span residues 10–44 (SLLM…GLYP), 45–79 (DNFT…GLEF), 80–110 (DSYV…MPQR), 111–141 (DVVS…MSQE), 147–177 (DEGT…VVTE), 181–215 (SVRI…NVKC), 216–242 (WTSM…SPVK), 243–277 (DVVL…GIRP), 278–312 (DNFV…RVTV), 313–343 (DKVV…IKER), 344–378 (DTAS…GVRL), 379–414 (DAIT…NVQP), and 415–449 (KSEH…SDET). The tract at residues 453–528 (VYCSLLSAAR…FPGCSSIEID (76 aa)) is type E motif. Residues 529–561 (GVGHEFIVGDDLLSHPKMDEINSMLHQTTNLML) are type E(+) motif.

Belongs to the PPR family. PCMP-E subfamily.

In Arabidopsis thaliana (Mouse-ear cress), this protein is Pentatricopeptide repeat-containing protein At1g31430 (PCMP-E55).